Here is a 530-residue protein sequence, read N- to C-terminus: Na(+)/H(+) antiporter NhaB (530 aa).

The next 11 membrane-spanning stretches (helical) occupy residues 23-43 (VAIIAFLIINPIVFFFINPFL), 45-65 (GWLLVVEFIFTLAMALKCYPL), 90-110 (LVANIEVLLLLVFMVAGIYFM), 113-133 (LLLFIFTKILLGIRSKVLLSI), 140-160 (AFLSAFLDALTVIAVIISVAV), 205-225 (LLMHAGVGTALGGVTTMVGEP), 238-258 (FGEFLLRMAPVTVPVFIAGML), 308-328 (IAVWLIVGLALHLAAVGLIGL), 351-371 (EEALPFTALLAVFFSIVAVII), 451-471 (ATPNGQAAFLFLLTSALAPLI), and 479-499 (VIMAFPYTLALSLVGFIGIMF).

Belongs to the NhaB Na(+)/H(+) (TC 2.A.34) antiporter family.

It is found in the cell inner membrane. The catalysed reaction is 2 Na(+)(in) + 3 H(+)(out) = 2 Na(+)(out) + 3 H(+)(in). Functionally, na(+)/H(+) antiporter that extrudes sodium in exchange for external protons. This Vibrio cholerae serotype O1 (strain ATCC 39541 / Classical Ogawa 395 / O395) protein is Na(+)/H(+) antiporter NhaB.